A 735-amino-acid polypeptide reads, in one-letter code: Protein-associating with the carboxyl-terminal domain of ezrin (735 aa).

Gly2 is lipidated: N-myristoyl glycine. The Protein kinase domain occupies Gly2–Phe245. HEAT repeat units lie at residues Phe194–Phe249, Leu285–Gly323, Leu333–Gln370, and Gln372–Pro409. Ser439 bears the Phosphoserine mark. 2 disordered regions span residues Leu505–His545 and Val604–Leu648. Over residues Trp528 to Glu538 the composition is skewed to acidic residues. Residues Trp547–Trp735 are interaction with EZR. A Phosphoserine modification is found at Ser701.

This sequence belongs to the protein kinase superfamily. In terms of assembly, interacts with EZR/VIL2 C-terminal domain. In terms of processing, may be myristoylated; myristoylation may target it to Golgi compartment.

It localises to the cytoplasm. The protein resides in the golgi apparatus. It is found in the cell projection. The protein localises to the lamellipodium. Functionally, may play a role in regulating cell adhesion/migration complexes in migrating cells. In Mus musculus (Mouse), this protein is Protein-associating with the carboxyl-terminal domain of ezrin (Scyl3).